The chain runs to 228 residues: Sensory transduction protein RegX3 (228 aa).

Residues 3–116 (SVLIVEDEES…ELIARIRAVL (114 aa)) form the Response regulatory domain. Asp-52 bears the 4-aspartylphosphate mark. The ompR/PhoB-type DNA-binding region spans 129–228 (DGVLEAGPVR…VRGLGYKLEG (100 aa)).

In terms of processing, phosphorylated by SenX3.

Its function is as follows. Member of the two-component regulatory system SenX3/RegX3 involved in stress response. The system is involved in phosphate starvation response. Once phosphorylated by SenX3, activates the expression of the alkaline phosphatase phoA, the high-affinity phosphate transporter pstSCAB, phnDCE, phnF and senX3. May act as a negative regulator of NhaA. Acts by binding to a DNA motif consisting of an inverted repeat. The protein is Sensory transduction protein RegX3 of Mycolicibacterium smegmatis (strain ATCC 700084 / mc(2)155) (Mycobacterium smegmatis).